Consider the following 372-residue polypeptide: MAEKLHISVLCGGQSTEHEISIQSAKNIVNTLDAAKYLISVIFIVHVGRWYLIDQPEMFLAHSPDHLVKEGSARPITIAFGDAAKPWQSLNGDGRRYSADCVFPMVHGTQGEDGALQGLLELLNLPYVGANVQSSAVCMEKDLTKTVLRAGGIPVVDWHTLSPRDATEGVYQRLLDRWGTSELFVKAVSLGSSVATLPVKTETEFTKAVKEVFRYDDRLMVEPRIRGREIECAVLGNGAPKASLPGEIIPHHDYYSYDAKYLDPNGATTTTSVDLSESVTKQIQQIAIDAFKMVHCSGMARVDFFVTPNNKVLVNEINTIPGFTNISMYPKMWEASGLPCPNLLDQLIELAIDRHQEQQKLIRRYEVKARSL.

The 205-residue stretch at 145–349 (KTVLRAGGIP…CPNLLDQLIE (205 aa)) folds into the ATP-grasp domain. 176-231 (DRWGTSELFVKAVSLGSSVATLPVKTETEFTKAVKEVFRYDDRLMVEPRIRGREIE) is a binding site for ATP. The Mg(2+) site is built by Asp303, Glu316, and Asn318.

The protein belongs to the D-alanine--D-alanine ligase family. The cofactor is Mg(2+). Mn(2+) is required as a cofactor.

Its subcellular location is the cytoplasm. It catalyses the reaction 2 D-alanine + ATP = D-alanyl-D-alanine + ADP + phosphate + H(+). The protein operates within cell wall biogenesis; peptidoglycan biosynthesis. Functionally, cell wall formation. The polypeptide is D-alanine--D-alanine ligase (Coxiella burnetii (strain RSA 331 / Henzerling II)).